Consider the following 243-residue polypeptide: 3-deoxy-manno-octulosonate cytidylyltransferase (243 aa).

It belongs to the KdsB family.

It localises to the cytoplasm. It carries out the reaction 3-deoxy-alpha-D-manno-oct-2-ulosonate + CTP = CMP-3-deoxy-beta-D-manno-octulosonate + diphosphate. The protein operates within nucleotide-sugar biosynthesis; CMP-3-deoxy-D-manno-octulosonate biosynthesis; CMP-3-deoxy-D-manno-octulosonate from 3-deoxy-D-manno-octulosonate and CTP: step 1/1. It participates in bacterial outer membrane biogenesis; lipopolysaccharide biosynthesis. In terms of biological role, activates KDO (a required 8-carbon sugar) for incorporation into bacterial lipopolysaccharide in Gram-negative bacteria. In Helicobacter acinonychis (strain Sheeba), this protein is 3-deoxy-manno-octulosonate cytidylyltransferase.